A 513-amino-acid chain; its full sequence is Probable DNA ligase (513 aa).

Glu215 serves as a coordination point for ATP. The N6-AMP-lysine intermediate role is filled by Lys217. Positions 222, 237, 266, 306, 378, and 384 each coordinate ATP.

Belongs to the ATP-dependent DNA ligase family. The cofactor is Mg(2+).

The enzyme catalyses ATP + (deoxyribonucleotide)n-3'-hydroxyl + 5'-phospho-(deoxyribonucleotide)m = (deoxyribonucleotide)n+m + AMP + diphosphate.. In terms of biological role, DNA ligase that seals nicks in double-stranded DNA during DNA replication, DNA recombination and DNA repair. This is Probable DNA ligase from Mycobacterium marinum (strain ATCC BAA-535 / M).